A 61-amino-acid chain; its full sequence is Small ribosomal subunit protein uS14 (61 aa).

Cys24, Cys27, Cys40, and Cys43 together coordinate Zn(2+).

This sequence belongs to the universal ribosomal protein uS14 family. Zinc-binding uS14 subfamily. Part of the 30S ribosomal subunit. Contacts proteins S3 and S10. Zn(2+) serves as cofactor.

In terms of biological role, binds 16S rRNA, required for the assembly of 30S particles and may also be responsible for determining the conformation of the 16S rRNA at the A site. In Halalkalibacterium halodurans (strain ATCC BAA-125 / DSM 18197 / FERM 7344 / JCM 9153 / C-125) (Bacillus halodurans), this protein is Small ribosomal subunit protein uS14.